Consider the following 101-residue polypeptide: NADH-quinone oxidoreductase subunit K (101 aa).

The next 3 membrane-spanning stretches (helical) occupy residues 4–24 (LAHFLVLGAILFAISIVGIFL), 30–50 (IVLLMAIELMLLAVNINFVAF), and 61–81 (VFVFFILTVAAAESAIGLAIL).

Belongs to the complex I subunit 4L family. As to quaternary structure, NDH-1 is composed of 14 different subunits. Subunits NuoA, H, J, K, L, M, N constitute the membrane sector of the complex.

It is found in the cell inner membrane. It carries out the reaction a quinone + NADH + 5 H(+)(in) = a quinol + NAD(+) + 4 H(+)(out). Functionally, NDH-1 shuttles electrons from NADH, via FMN and iron-sulfur (Fe-S) centers, to quinones in the respiratory chain. The immediate electron acceptor for the enzyme in this species is believed to be ubiquinone. Couples the redox reaction to proton translocation (for every two electrons transferred, four hydrogen ions are translocated across the cytoplasmic membrane), and thus conserves the redox energy in a proton gradient. The sequence is that of NADH-quinone oxidoreductase subunit K from Cupriavidus taiwanensis (strain DSM 17343 / BCRC 17206 / CCUG 44338 / CIP 107171 / LMG 19424 / R1) (Ralstonia taiwanensis (strain LMG 19424)).